Reading from the N-terminus, the 376-residue chain is Alcohol dehydrogenase class-3 (376 aa).

An N-acetylalanine modification is found at Ala-1. Zn(2+) contacts are provided by Cys-47, His-69, Cys-99, Cys-102, Cys-105, Cys-113, and Cys-176.

This sequence belongs to the zinc-containing alcohol dehydrogenase family. Class-III subfamily. As to quaternary structure, homodimer. Zn(2+) is required as a cofactor.

Its subcellular location is the cytoplasm. The catalysed reaction is a primary alcohol + NAD(+) = an aldehyde + NADH + H(+). The enzyme catalyses a secondary alcohol + NAD(+) = a ketone + NADH + H(+). It carries out the reaction S-(hydroxymethyl)glutathione + NADP(+) = S-formylglutathione + NADPH + H(+). It catalyses the reaction S-(hydroxymethyl)glutathione + NAD(+) = S-formylglutathione + NADH + H(+). The catalysed reaction is S-nitrosoglutathione + NADH + H(+) = S-(hydroxysulfenamide)glutathione + NAD(+). Class-III ADH is remarkably ineffective in oxidizing ethanol, but it readily catalyzes the oxidation of long-chain primary alcohols and the oxidation of S-(hydroxymethyl) glutathione. Also acts as a S-nitroso-glutathione reductase by catalyzing the NADH-dependent reduction of S-nitrosoglutathione, thereby regulating protein S-nitrosylation. This chain is Alcohol dehydrogenase class-3, found in Scyliorhinus canicula (Small-spotted catshark).